A 1351-amino-acid polypeptide reads, in one-letter code: Alpha-latrotoxin-Lh1a (1351 aa).

A signal peptide spans 1–7 (SLVRMRR). A furin-like endopeptidase recognition region region spans residues 4-7 (RMRR). Positions 226–245 (VLYALLYGTQTYVSVMFFLL) are helix H8 is the probable transmembrane region of the tetrameric pore inserted in the target cell membrane. The cysteines at positions 401 and 1054 are disulfide-linked. ANK repeat units follow at residues 446–477 (LYNTANNPDSAVGFKEFTKLNYDGANIRATFE), 478–509 (QGRTVFHAAAKSGNSRIMIGLTFLVKSNELNQ), 513–542 (KGYTPIHVAADSGNAGIVNLLIQRGVSINS), 547–577 (FLQTPLHLAAQRGFVTTFQRLMESPEININE), 581–610 (DGFTPLHYAVRGGERILEAFINQIRIDLNA), 614–644 (KGLTPFHLAIIKDDWPVASTLLGSKKVDVNA), 648–678 (NNMTALHYAAILGYLETTKQLINLKEINADV), 683–711 (GLLSALHYAILYKHDDVASFLLRSSNVNV), 717–746 (GGITPLHLAVIQGRTQILSLMFDIGVNIEQ), 750–779 (EKYTPLHLAAMSKYPELIQILLDQGSNFEA), 783–812 (SGATPLHLATFKGKSKAALILLNNEVNWRD), 816–846 (NGQMPIHGAAMNGLLDVAQAIISIDATVLDI), 850–879 (NSDTPLNLAAQKSHIDVIKYFIDQGADINT), 883–912 (TGHAPLLAFSKKGNLDMVKYLFDKNANVYI), 916–945 (DGINFFYYAVRNGHLNIVKYAMSEKDKFEW), 959–991 (EECAISHFAVCDAVQFDKIEIVKYFVTTLGNFA), 992–1019 (ICGPLHQAARYGHLDIEKYLVEEEDLNV), 1023–1052 (KPDTPLCYASENGHLAVVQYLVSNGAKVNH), 1056–1085 (NGMTAIDKAITKNHLQVVQFLAANGVDFRR), 1089–1119 (LGATPFLTAVSENAFDIAEYLIRENRQDIDI), 1125–1154 (DKETALHLAVYYKNLQMIKLLVKYGIDMTI), and 1158–1187 (YDKTALDIATDLKNSNIVEYLKTKSGKFRR). Positions 1184 to 1187 (KFRR) are furin-like endopeptidase recognition region. Residues 1188–1351 (EYKSSYGEHS…LGSVIMNSHS (164 aa)) constitute a propeptide that is removed on maturation.

This sequence belongs to the cationic peptide 01 (latrotoxin) family. 03 (alpha-latrotoxin) subfamily. In terms of assembly, homotetramer in membranes. In terms of processing, processed by furin-like proteases at both the N- and C-termini. As to expression, expressed in venom gland, cephalothorax, and abdomen tissues from both males and females.

It is found in the secreted. Its subcellular location is the target cell membrane. Functionally, presynaptic neurotoxin that causes massive release of neurotransmitters from vertebrate (but not invertebrate) nerve terminals and endocrine cells via a complex mechanism involving activation of receptor(s) and toxin insertion into the plasma membrane with subsequent pore formation. Binds to neurexin-1-alpha (NRXN1) in a calcium dependent manner, adhesion G protein-coupled receptor L1 (ADGRL1, also termed latrophilin-1 and calcium-independent receptor of latrotoxin (CIRL)), and receptor-type tyrosine-protein phosphatase S (PTPRS), also termed PTP sigma. NRXN1 and PTPRS are suggested to provide a platform for binding and subsequent pore formation events. In contrast, binding to ADGRL1 does not involve oligomerization and channel formation, but direct downstream stimulation of the synaptic fusion machinery. Induces rapid muscle contracture and loss of twitch tension when added to the isolated and indirectly stimulated chick biventer cervicis nerve-muscle preparation. The sequence is that of Alpha-latrotoxin-Lh1a from Latrodectus hasselti (Redback spider).